A 99-amino-acid polypeptide reads, in one-letter code: Aspartyl/glutamyl-tRNA(Asn/Gln) amidotransferase subunit C (99 aa).

It belongs to the GatC family. As to quaternary structure, heterotrimer of A, B and C subunits.

It catalyses the reaction L-glutamyl-tRNA(Gln) + L-glutamine + ATP + H2O = L-glutaminyl-tRNA(Gln) + L-glutamate + ADP + phosphate + H(+). The enzyme catalyses L-aspartyl-tRNA(Asn) + L-glutamine + ATP + H2O = L-asparaginyl-tRNA(Asn) + L-glutamate + ADP + phosphate + 2 H(+). Allows the formation of correctly charged Asn-tRNA(Asn) or Gln-tRNA(Gln) through the transamidation of misacylated Asp-tRNA(Asn) or Glu-tRNA(Gln) in organisms which lack either or both of asparaginyl-tRNA or glutaminyl-tRNA synthetases. The reaction takes place in the presence of glutamine and ATP through an activated phospho-Asp-tRNA(Asn) or phospho-Glu-tRNA(Gln). The chain is Aspartyl/glutamyl-tRNA(Asn/Gln) amidotransferase subunit C from Mycolicibacterium smegmatis (strain ATCC 700084 / mc(2)155) (Mycobacterium smegmatis).